The following is a 480-amino-acid chain: 3-isopropylmalate dehydratase large subunit (480 aa).

[4Fe-4S] cluster-binding residues include cysteine 361, cysteine 421, and cysteine 424.

It belongs to the aconitase/IPM isomerase family. LeuC type 1 subfamily. Heterodimer of LeuC and LeuD. It depends on [4Fe-4S] cluster as a cofactor.

It catalyses the reaction (2R,3S)-3-isopropylmalate = (2S)-2-isopropylmalate. It participates in amino-acid biosynthesis; L-leucine biosynthesis; L-leucine from 3-methyl-2-oxobutanoate: step 2/4. Functionally, catalyzes the isomerization between 2-isopropylmalate and 3-isopropylmalate, via the formation of 2-isopropylmaleate. The polypeptide is 3-isopropylmalate dehydratase large subunit (Corynebacterium diphtheriae (strain ATCC 700971 / NCTC 13129 / Biotype gravis)).